Consider the following 507-residue polypeptide: MKATKETLSPTRVKLTVEVPFDELKPSVDATYRKLARQVRVSGFRPGKVPPRILDQRLGRGVILDEAIQEALPRLYSEAVQAEEVDVLSRPEVDITEFADGAQLVFTAEMDVRPEVTLPEFGELELVVEPATVTDEQVEEHLTNLRDRFAVLKPVERPVQEGDFVSLDLSASVDGEAIEDATATGMSYEVGSGNLIDGIDEAIAGASDGDERTFDTELLAGEYTGRTAQVTAVVRGVKEKELPELDDDFATTASEFDTLEELRADVRTRLESNRKVEQLGEARDKMLDKLIELVEVPVPDSVLAGELEAREHRLGHELEHIGTDRATYLETLGQSAEEFDAEVRSSAGKAIRSQFILDAVIDAESIGLDQGELMEQILMRAQRAGVQPDQYAQQLAQGEGLTALMADVLRTKALFLLLENAKVVDTEGNAVELNLPRRPSGEAEDDVRDISDELDAEELEVPAAAPSAEVTAAAGDEATATATATDADTATDADGAGDSELPASETK.

A PPIase FKBP-type domain is found at 162 to 243 (GDFVSLDLSA…VRGVKEKELP (82 aa)). The segment at 434 to 507 (NLPRRPSGEA…DSELPASETK (74 aa)) is disordered. Positions 442 to 460 (EAEDDVRDISDELDAEELE) are enriched in acidic residues. A compositionally biased stretch (low complexity) spans 461–488 (VPAAAPSAEVTAAAGDEATATATATDAD).

It belongs to the FKBP-type PPIase family. Tig subfamily.

Its subcellular location is the cytoplasm. It catalyses the reaction [protein]-peptidylproline (omega=180) = [protein]-peptidylproline (omega=0). Its function is as follows. Involved in protein export. Acts as a chaperone by maintaining the newly synthesized protein in an open conformation. Functions as a peptidyl-prolyl cis-trans isomerase. This chain is Trigger factor, found in Parafrankia sp. (strain EAN1pec).